The chain runs to 91 residues: Small ribosomal subunit protein uS19 (91 aa).

Residues 72-91 (GEFSPTRKFGGHGDDKKKKK) are disordered. Positions 82–91 (GHGDDKKKKK) are enriched in basic and acidic residues.

Belongs to the universal ribosomal protein uS19 family.

Protein S19 forms a complex with S13 that binds strongly to the 16S ribosomal RNA. This is Small ribosomal subunit protein uS19 from Spiroplasma kunkelii.